We begin with the raw amino-acid sequence, 218 residues long: Orotate phosphoribosyltransferase (218 aa).

Position 26 (lysine 26) interacts with 5-phospho-alpha-D-ribose 1-diphosphate. 34-35 contacts orotate; that stretch reads FF. 5-phospho-alpha-D-ribose 1-diphosphate is bound by residues 72-73, arginine 99, lysine 100, lysine 103, histidine 105, and 124-132; these read YK and DDVITAGTA. The orotate site is built by threonine 128 and arginine 156.

The protein belongs to the purine/pyrimidine phosphoribosyltransferase family. PyrE subfamily. Homodimer. Requires Mg(2+) as cofactor.

The catalysed reaction is orotidine 5'-phosphate + diphosphate = orotate + 5-phospho-alpha-D-ribose 1-diphosphate. The protein operates within pyrimidine metabolism; UMP biosynthesis via de novo pathway; UMP from orotate: step 1/2. Functionally, catalyzes the transfer of a ribosyl phosphate group from 5-phosphoribose 1-diphosphate to orotate, leading to the formation of orotidine monophosphate (OMP). The sequence is that of Orotate phosphoribosyltransferase from Hamiltonella defensa subsp. Acyrthosiphon pisum (strain 5AT).